Here is a 415-residue protein sequence, read N- to C-terminus: Gamma-glutamyl phosphate reductase (415 aa).

This sequence belongs to the gamma-glutamyl phosphate reductase family.

The protein resides in the cytoplasm. The catalysed reaction is L-glutamate 5-semialdehyde + phosphate + NADP(+) = L-glutamyl 5-phosphate + NADPH + H(+). It functions in the pathway amino-acid biosynthesis; L-proline biosynthesis; L-glutamate 5-semialdehyde from L-glutamate: step 2/2. Functionally, catalyzes the NADPH-dependent reduction of L-glutamate 5-phosphate into L-glutamate 5-semialdehyde and phosphate. The product spontaneously undergoes cyclization to form 1-pyrroline-5-carboxylate. In Thermotoga maritima (strain ATCC 43589 / DSM 3109 / JCM 10099 / NBRC 100826 / MSB8), this protein is Gamma-glutamyl phosphate reductase.